The following is a 799-amino-acid chain: Cadherin-8 (799 aa).

An N-terminal signal peptide occupies residues 1–29 (MPERLAETLMDLWTPLIILWITLPSCVYT). Positions 30-61 (APMNQAHVLTTGSPLELSRQSEDMRILSRSKR) are excised as a propeptide. 5 consecutive Cadherin domains span residues 62 to 167 (GWVW…APEF), 168 to 276 (LNGP…PPKF), 277 to 391 (AQSL…PPVF), 392 to 494 (SSPT…DNAP), and 495 to 616 (EFAS…YVLP). The Extracellular portion of the chain corresponds to 62-621 (GWVWNQMFVL…AYVLPIGLSM (560 aa)). N-linked (GlcNAc...) asparagine glycosylation is present at N188. N463, N473, and N544 each carry an N-linked (GlcNAc...) asparagine glycan. The chain crosses the membrane as a helical span at residues 622 to 642 (GALIAILACIILLLVIVVLFV). Over 643 to 799 (TLRRHKNEPL…YSVGESDKET (157 aa)) the chain is Cytoplasmic. S795 carries the phosphoserine modification.

It is found in the cell membrane. Cadherins are calcium-dependent cell adhesion proteins. They preferentially interact with themselves in a homophilic manner in connecting cells; cadherins may thus contribute to the sorting of heterogeneous cell types. The protein is Cadherin-8 (Cdh8) of Mus musculus (Mouse).